Reading from the N-terminus, the 145-residue chain is MSQKAIKGYINLIIPAAGATPAPPIGPALGQRKVNIAAFCKDFNDATQGMEKGIPLPTVITVYEDSSFSFKIKTPPAAYFLKKYAKITKGSSSTKKEAVVGKVTMDDCREIAKLKMPDLNTKNIEAATKIICGSAASMGLEVVGN.

The protein belongs to the universal ribosomal protein uL11 family. In terms of assembly, part of the ribosomal stalk of the 50S ribosomal subunit. Interacts with L10 and the large rRNA to form the base of the stalk. L10 forms an elongated spine to which L12 dimers bind in a sequential fashion forming a multimeric L10(L12)X complex. Post-translationally, one or more lysine residues are methylated.

Forms part of the ribosomal stalk which helps the ribosome interact with GTP-bound translation factors. The chain is Large ribosomal subunit protein uL11 from Rickettsia peacockii (strain Rustic).